Here is a 209-residue protein sequence, read N- to C-terminus: Elongation factor Ts, chloroplastic (209 aa).

The protein belongs to the EF-Ts family.

It is found in the plastid. Its subcellular location is the chloroplast. Its function is as follows. Associates with the EF-Tu.GDP complex and induces the exchange of GDP to GTP. It remains bound to the aminoacyl-tRNA.EF-Tu.GTP complex up to the GTP hydrolysis stage on the ribosome. The sequence is that of Elongation factor Ts, chloroplastic (tsf) from Cyanidioschyzon merolae (strain NIES-3377 / 10D) (Unicellular red alga).